A 241-amino-acid polypeptide reads, in one-letter code: Major prion protein (241 aa).

A signal peptide spans 1-15 (MLVLFVATWSDLGLC). Positions 16–31 (KKRPKPGGWNTGGSRY) are interaction with ADGRG6. Positions 16 to 223 (KKRPKPGGWN…ESQAYYQRGS (208 aa)) are interaction with GRB2, ERI3 and SYN1. The tract at residues 18–100 (RPKPGGWNTG…QWNKPSKPKT (83 aa)) is disordered. 5 tandem repeats follow at residues 44-52 (PQGGGSWGQ), 53-60 (PHGGGWGQ), 61-68 (PHGGGWGQ), 69-76 (PHGGGWGQ), and 77-84 (PHGGGWGQ). Positions 44 to 84 (PQGGGSWGQPHGGGWGQPHGGGWGQPHGGGWGQPHGGGWGQ) are 5 X 8 AA tandem repeats of P-H-G-G-G-W-G-Q. A compositionally biased stretch (gly residues) spans 45–88 (QGGGSWGQPHGGGWGQPHGGGWGQPHGGGWGQPHGGGWGQGGGT). Residues histidine 54, glycine 55, glycine 56, histidine 62, glycine 63, glycine 64, histidine 70, glycine 71, glycine 72, histidine 78, glycine 79, and glycine 80 each contribute to the Cu(2+) site. A disulfide bond links cysteine 172 and cysteine 207. N-linked (GlcNAc...) asparagine glycosylation is found at asparagine 174 and asparagine 190. A lipid anchor (GPI-anchor amidated serine) is attached at serine 223. Positions 224–241 (SMVLFSSPPVILLISFLI) are cleaved as a propeptide — removed in mature form.

The protein belongs to the prion family. Monomer and homodimer. Has a tendency to aggregate into amyloid fibrils containing a cross-beta spine, formed by a steric zipper of superposed beta-strands. Soluble oligomers may represent an intermediate stage on the path to fibril formation. Copper binding may promote oligomerization. Interacts with GRB2, APP, ERI3/PRNPIP and SYN1. Mislocalized cytosolically exposed PrP interacts with MGRN1; this interaction alters MGRN1 subcellular location and causes lysosomal enlargement. Interacts with APP. Interacts with KIAA1191. Interacts with ADGRG6.

It localises to the cell membrane. The protein resides in the golgi apparatus. Functionally, its primary physiological function is unclear. May play a role in neuronal development and synaptic plasticity. May be required for neuronal myelin sheath maintenance. May promote myelin homeostasis through acting as an agonist for ADGRG6 receptor. May play a role in iron uptake and iron homeostasis. Soluble oligomers are toxic to cultured neuroblastoma cells and induce apoptosis (in vitro). Association with GPC1 (via its heparan sulfate chains) targets PRNP to lipid rafts. Also provides Cu(2+) or Zn(2+) for the ascorbate-mediated GPC1 deaminase degradation of its heparan sulfate side chains. The polypeptide is Major prion protein (PRNP) (Plecturocebus moloch (Dusky titi monkey)).